We begin with the raw amino-acid sequence, 805 residues long: Ubiquitin carboxyl-terminal hydrolase 10 (805 aa).

A disordered region spans residues 139 to 170 (DGSGNADSDGTSGTGQRERKKKKKRPPGYYSY). Positions 143–153 (NADSDGTSGTG) are enriched in polar residues. The 381-residue stretch at 422-802 (RGLINKGNWC…TAYLLYYRRV (381 aa)) folds into the USP domain. Residue Cys-431 is the Nucleophile of the active site. Positions 561–593 (HINNGPDPVSEKEEINKDEQEGSDEEWEQVGPR) are disordered. Over residues 569–580 (VSEKEEINKDEQ) the composition is skewed to basic and acidic residues. Residue His-756 is the Proton acceptor of the active site.

Belongs to the peptidase C19 family. USP10 subfamily.

Its subcellular location is the cytoplasm. It is found in the nucleus. It carries out the reaction Thiol-dependent hydrolysis of ester, thioester, amide, peptide and isopeptide bonds formed by the C-terminal Gly of ubiquitin (a 76-residue protein attached to proteins as an intracellular targeting signal).. Its function is as follows. Hydrolase that can remove conjugated ubiquitin from target proteins such as p53/tp53, rps2/us5, rps3/us3, rps10/eS10, becn1, snx3 and cftr. Acts as an essential regulator of p53/tp53 stability: in unstressed cells, specifically deubiquitinates p53/tp53 in the cytoplasm, leading to counteracts MDM2 action and stabilize p53/tp53. Following DNA damage, translocates to the nucleus and deubiquitinates p53/tp53, leading to regulate the p53/TP53-dependent DNA damage response. Component of a regulatory loop that controls autophagy and p53/tp53 levels. Plays a key role in 40S ribosome subunit recycling when a ribosome has stalled during translation: acts both by inhibiting formation of stress granules, which store stalled translation pre-initiation complexes, and mediating deubiquitination of 40S ribosome subunits. Deubiquitinates cftr in early endosomes, enhancing its endocytic recycling. The chain is Ubiquitin carboxyl-terminal hydrolase 10 (usp10) from Xenopus tropicalis (Western clawed frog).